An 838-amino-acid polypeptide reads, in one-letter code: MEGGAKSNDVSAAPIAQPLSEDPTDIASNIKYHAQYTPHFSPFKFEPLQAYYAATADSVRDRLIKQWNDTYLHYDKVNPKQTYYLSMEYLQGRALTNAVGNLDIHNAYADALNKLGQQLEEVVEQEKDAALGNGGLGRLASCFLDSMATLNLPAWGYGLRYRYGLFKQLITKAGQEEVPEDWLEKFSPWEIVRHDVVFPIRFFGHVEVLPSGSRKWVGGEVLQALAYDVPIPGYRTKNTNSLRLWEAKASSEDFNLFLFNDGQYDAAAQLHSRAQQICAVLYPGDATENGKLLRLKQQFFLCSASLQDIIARFKEREDGKGSHQWSEFPKKVAIQLNDTHPTLTIPELMRLLMDDEGLGWDESWNITTRTIAYTNHTVLPEALEKWSQAVMWKLLPRHMEIIEEIDKRFVATIMSERPDLENKMPSMRILDHNATKPVVHMANLCVVSSHTVNGVAQLHSDILKAELFADYVSVWPTKFQNKTNGITPRRWIRFCSPELSHIITKWLKTDQWVTNLELLANLREFADNSELHAEWESAKMANKQRLAQYILHVTGVSIDPNSLFDIQVKRIHEYKRQLLNILGVIYRYKKLKGMSPEERKNTTPRTVMIGGKAFATYTNAKRIVKLVTDVGDVVNSDPDVNDYLKVVFVPNYNVSVAEMLIPGSELSQHISTAGMEASGTSNMKFALNGCLIIGTLDGANVEIREEIGEDNFFLFGATADEVPQLRKDRENGLFKPDPRFEEAKQFIRSGAFGTYDYNPLLESLEGNSGYGRGDYFLVGHDFPSYMDAQARVDEAYKDRKRWIKMSILSTSGSGKFSSDRTISQYAKEIWNIAECRVP.

The tract at residues 1–21 is disordered; the sequence is MEGGAKSNDVSAAPIAQPLSE. An N6-(pyridoxal phosphate)lysine modification is found at lysine 684.

It belongs to the glycogen phosphorylase family. Pyridoxal 5'-phosphate is required as a cofactor.

Its subcellular location is the cytoplasm. The enzyme catalyses [(1-&gt;4)-alpha-D-glucosyl](n) + phosphate = [(1-&gt;4)-alpha-D-glucosyl](n-1) + alpha-D-glucose 1-phosphate. In terms of biological role, phosphorylase is an important allosteric enzyme in carbohydrate metabolism. Enzymes from different sources differ in their regulatory mechanisms and in their natural substrates. However, all known phosphorylases share catalytic and structural properties. The sequence is that of Alpha-glucan phosphorylase, H isozyme from Solanum tuberosum (Potato).